We begin with the raw amino-acid sequence, 209 residues long: High frequency lysogenization protein HflD homolog (209 aa).

This sequence belongs to the HflD family.

It localises to the cytoplasm. It is found in the cell inner membrane. The polypeptide is High frequency lysogenization protein HflD homolog (Sodalis glossinidius (strain morsitans)).